We begin with the raw amino-acid sequence, 145 residues long: Basic phospholipase A2 cPt10 (145 aa).

Residues 1 to 21 form the signal peptide; that stretch reads MYPAHLLVLLAVCVSLLGASA. Residues 22–27 constitute a propeptide that is removed on maturation; sequence IPPLPL. 7 cysteine pairs are disulfide-bonded: C38–C98, C54–C144, C56–C72, C71–C125, C78–C118, C87–C111, and C105–C116. Positions 55, 57, and 59 each coordinate Ca(2+). H75 is a catalytic residue. Residue D76 coordinates Ca(2+). The active site involves D119.

It belongs to the phospholipase A2 family. Group I subfamily. D49 sub-subfamily. Ca(2+) is required as a cofactor. As to expression, expressed by the venom gland.

The protein resides in the secreted. The enzyme catalyses a 1,2-diacyl-sn-glycero-3-phosphocholine + H2O = a 1-acyl-sn-glycero-3-phosphocholine + a fatty acid + H(+). In terms of biological role, PLA2 catalyzes the calcium-dependent hydrolysis of the 2-acyl groups in 3-sn-phosphoglycerides. In Laticauda semifasciata (Black-banded sea krait), this protein is Basic phospholipase A2 cPt10.